Here is a 70-residue protein sequence, read N- to C-terminus: Small integral membrane protein 42 (70 aa).

The chain crosses the membrane as a helical span at residues 26–46 (LVNVLFFFTPLMTLVTLLILV).

The protein resides in the membrane. The chain is Small integral membrane protein 42 from Homo sapiens (Human).